Here is a 162-residue protein sequence, read N- to C-terminus: Beta-lactoglobulin (162 aa).

3 disulfides stabilise this stretch: Cys-66/Cys-160, Cys-106/Cys-119, and Cys-106/Cys-121.

It belongs to the calycin superfamily. Lipocalin family. As to quaternary structure, under physiological conditions beta-lactoglobulin exists as an equilibrium mixture of monomeric and dimeric forms. In terms of processing, alternate disulfide bonds occur in equal amounts.

Its subcellular location is the secreted. Its function is as follows. Lactoglobulin is the primary component of whey, it binds retinol and is probably involved in the transport of that molecule. The sequence is that of Beta-lactoglobulin (LGB) from Ovis aries musimon (Mouflon).